The following is a 145-amino-acid chain: Partner of bursicon (145 aa).

Residues 1–28 form the signal peptide; it reads MKENFSIMFIHSIFLILIIFIYSNETIA. Cystine bridges form between C36/C94, C60/C109, C69/C135, C73/C137, and C91/C140. The 96-residue stretch at 36 to 131 folds into the CTCK domain; it reads CETLQSEVHI…NGVMEIKIRE (96 aa).

Heterodimer of burs and pburs.

It localises to the secreted. Its function is as follows. Final heterodimeric neurohormone released at the end of the molting cycle, involved in the sclerotization (tanning) of the insect cuticle, melanization and wing spreading. This Apis mellifera (Honeybee) protein is Partner of bursicon (pburs).